A 113-amino-acid polypeptide reads, in one-letter code: Protein translation factor SUI1 homolog (113 aa).

Positions 1–24 (MSELDSQVPTAFDPFADANAEDSG) are disordered. An N-acetylserine modification is found at S2.

Belongs to the SUI1 family.

Its function is as follows. Probably involved in translation. This Brassica oleracea (Wild cabbage) protein is Protein translation factor SUI1 homolog.